The chain runs to 235 residues: MRFDPPLEEGRLLRRYKRFLADIESAGGERLTIHCPNTGSMLNCMSEGCRVWFSRSDDPRRKLPGTWELSETPQGRLACVNTARANRLVEEALLAGDIPELAGFASLRREVAYGVENSRADFRLEYPAGALFIEVKSVTLGFDETAVAAFPDAVTLRGAKHLRELAALARDGVRAVQLYCVNLSGIEAVRPADEIDPAYGKALREAAQAGVEVLAYGAEVTTEGLRLARRLPVRL.

The protein belongs to the SfsA family.

This is Sugar fermentation stimulation protein homolog from Pseudomonas paraeruginosa (strain DSM 24068 / PA7) (Pseudomonas aeruginosa (strain PA7)).